Consider the following 671-residue polypeptide: DNA ligase (671 aa).

NAD(+) contacts are provided by residues 32-36 (DAEYD), 81-82 (SL), and Glu113. Lys115 acts as the N6-AMP-lysine intermediate in catalysis. Arg136, Glu173, Lys290, and Lys314 together coordinate NAD(+). Residues Cys408, Cys411, Cys426, and Cys432 each contribute to the Zn(2+) site. Positions 593–671 (EIDSPFAGKT…EAEMIRLLGA (79 aa)) constitute a BRCT domain.

It belongs to the NAD-dependent DNA ligase family. LigA subfamily. Mg(2+) is required as a cofactor. Mn(2+) serves as cofactor.

It catalyses the reaction NAD(+) + (deoxyribonucleotide)n-3'-hydroxyl + 5'-phospho-(deoxyribonucleotide)m = (deoxyribonucleotide)n+m + AMP + beta-nicotinamide D-nucleotide.. In terms of biological role, DNA ligase that catalyzes the formation of phosphodiester linkages between 5'-phosphoryl and 3'-hydroxyl groups in double-stranded DNA using NAD as a coenzyme and as the energy source for the reaction. It is essential for DNA replication and repair of damaged DNA. In Salmonella dublin (strain CT_02021853), this protein is DNA ligase.